The primary structure comprises 337 residues: Tryptophan--tRNA ligase (337 aa).

Residues 9-11 (RPT) and 17-18 (GH) contribute to the ATP site. Residues 10–18 (PTGRLHLGH) carry the 'HIGH' region motif. Asp137 provides a ligand contact to L-tryptophan. ATP contacts are provided by residues 149–151 (GKD), Leu187, and 195–199 (KMSKS). The 'KMSKS' region signature appears at 195–199 (KMSKS).

Belongs to the class-I aminoacyl-tRNA synthetase family. As to quaternary structure, homodimer.

Its subcellular location is the cytoplasm. The catalysed reaction is tRNA(Trp) + L-tryptophan + ATP = L-tryptophyl-tRNA(Trp) + AMP + diphosphate + H(+). Its function is as follows. Catalyzes the attachment of tryptophan to tRNA(Trp). The polypeptide is Tryptophan--tRNA ligase (Treponema pallidum (strain Nichols)).